Consider the following 275-residue polypeptide: Alpha carbonic anhydrase 7 (275 aa).

Residues 1-27 form the signal peptide; it reads MVNYSSISCIFFVALFSIFTIVSISSA. 2 N-linked (GlcNAc...) asparagine glycosylation sites follow: Asn-3 and Asn-96. Residues 38–272 enclose the Alpha-carbonic anhydrase domain; that stretch reads REFNYKKNDE…TNKRIVHLYR (235 aa). Residues Cys-63 and Cys-222 are joined by a disulfide bond. His-104 functions as the Proton acceptor in the catalytic mechanism. Residues His-130, His-132, and His-149 each contribute to the Zn(2+) site. 218-219 is a binding site for substrate; sequence TT. Residue Asn-225 is glycosylated (N-linked (GlcNAc...) asparagine).

The protein belongs to the alpha-class carbonic anhydrase family. The cofactor is Zn(2+). N-glycosylated.

It localises to the plastid. The protein localises to the chloroplast stroma. The enzyme catalyses hydrogencarbonate + H(+) = CO2 + H2O. Functionally, reversible hydration of carbon dioxide. In Arabidopsis thaliana (Mouse-ear cress), this protein is Alpha carbonic anhydrase 7 (ACA7).